A 154-amino-acid chain; its full sequence is Large ribosomal subunit protein uL30 (154 aa).

A disordered region spans residues 114–139; that stretch reads PVLRLHPPRGGHRGQKHPTAEGGQIG. Basic residues predominate over residues 119 to 129; it reads HPPRGGHRGQK.

Belongs to the universal ribosomal protein uL30 family. As to quaternary structure, part of the 50S ribosomal subunit.

The protein is Large ribosomal subunit protein uL30 of Haloquadratum walsbyi (strain DSM 16790 / HBSQ001).